The chain runs to 618 residues: NAD(P)H-quinone oxidoreductase subunit 5, organellar chromatophore 2 (618 aa).

A run of 17 helical transmembrane segments spans residues 16-36 (LIPIYGFAGMVVSLPWATGWI), 43-63 (TPAYLNLIISLVAFLHGSLAL), 99-119 (LAALELITGLSFIAQLYALGY), 129-149 (FFALAGFFEGAMSGVVLSDSL), 152-172 (SYFLLEMLTLSTYLLVGFWYA), 190-210 (GDVMLLMGVVALSAFAGGMEF), 220-240 (NTLTPLATTLLGLALIAGPIG), 267-287 (SVVVTCGAIVLMKLMPILHHS), 291-311 (IAVLLAIGTISALGGSLVSIA), 318-335 (TLSYSTTAYLGLVFIAIA), 348-368 (AHAIAKALLSMSIGSVIAVSN), 390-410 (LIAGAGLTGLLPLGCFWCFGL), 419-438 (APWFASIYLITNTLTALNLT), 461-481 (WQMALPMVVLLVAVALTPWMM), 495-515 (AITGITVATSGLVGLTIGAIV), 553-573 (IVSGCSYIASWFDTAIVNGFV), and 597-617 (SYILTVVITIVFLLAALSWLV).

This sequence belongs to the complex I subunit 5 family. As to quaternary structure, NDH is composed of at least 16 different subunits, 5 of which are encoded in the nucleus.

It is found in the plastid. It localises to the organellar chromatophore thylakoid membrane. It carries out the reaction a plastoquinone + NADH + (n+1) H(+)(in) = a plastoquinol + NAD(+) + n H(+)(out). It catalyses the reaction a plastoquinone + NADPH + (n+1) H(+)(in) = a plastoquinol + NADP(+) + n H(+)(out). NDH shuttles electrons from NAD(P)H:plastoquinone, via FMN and iron-sulfur (Fe-S) centers, to quinones in the photosynthetic chain and possibly in a chloroplast respiratory chain. The immediate electron acceptor for the enzyme in this species is believed to be plastoquinone. Couples the redox reaction to proton translocation, and thus conserves the redox energy in a proton gradient. This Paulinella chromatophora protein is NAD(P)H-quinone oxidoreductase subunit 5, organellar chromatophore 2 (ndhF2).